A 498-amino-acid polypeptide reads, in one-letter code: Guanosine-5'-triphosphate,3'-diphosphate pyrophosphatase (498 aa).

This sequence belongs to the GppA/Ppx family. GppA subfamily.

It carries out the reaction guanosine 3'-diphosphate 5'-triphosphate + H2O = guanosine 3',5'-bis(diphosphate) + phosphate + H(+). It participates in purine metabolism; ppGpp biosynthesis; ppGpp from GTP: step 2/2. Catalyzes the conversion of pppGpp to ppGpp. Guanosine pentaphosphate (pppGpp) is a cytoplasmic signaling molecule which together with ppGpp controls the 'stringent response', an adaptive process that allows bacteria to respond to amino acid starvation, resulting in the coordinated regulation of numerous cellular activities. The polypeptide is Guanosine-5'-triphosphate,3'-diphosphate pyrophosphatase (Serratia proteamaculans (strain 568)).